We begin with the raw amino-acid sequence, 415 residues long: Lupus La protein homolog (415 aa).

In terms of domain architecture, HTH La-type RNA-binding spans N7 to E99. A phosphoserine mark is found at S92 and S94. The RRM domain maps to R111–D187. K116 bears the N6-acetyllysine mark. T120 carries the phosphothreonine modification. N6-acetyllysine occurs at positions 128 and 327. The 118-residue stretch at E226–H343 folds into the xRRM domain. The tract at residues E323–K415 is disordered. The segment covering W328–G341 has biased composition (basic residues). At K356 the chain carries N6-acetyllysine. T377 carries the phosphothreonine modification. Over residues T377–K415 the composition is skewed to basic and acidic residues.

As to quaternary structure, interacts with DDX15. May interact with RUFY1. In terms of processing, phosphorylated.

It localises to the nucleus. Functionally, binds to the 3' poly(U) terminus of nascent RNA polymerase III transcripts, protecting them from exonuclease digestion and facilitating their folding and maturation. The protein is Lupus La protein homolog (Ssb) of Rattus norvegicus (Rat).